A 629-amino-acid chain; its full sequence is Probable potassium transport system protein Kup 3 (629 aa).

Transmembrane regions (helical) follow at residues leucine 20 to phenylalanine 40, valine 61 to leucine 81, proline 106 to threonine 126, proline 143 to isoleucine 163, isoleucine 171 to alanine 191, glycine 209 to leucine 229, tryptophan 253 to leucine 273, phenylalanine 291 to isoleucine 311, isoleucine 343 to phenylalanine 363, alanine 372 to leucine 392, isoleucine 400 to alanine 420, and phenylalanine 425 to isoleucine 445.

It belongs to the HAK/KUP transporter (TC 2.A.72) family.

Its subcellular location is the cell inner membrane. It catalyses the reaction K(+)(in) + H(+)(in) = K(+)(out) + H(+)(out). In terms of biological role, transport of potassium into the cell. Likely operates as a K(+):H(+) symporter. This chain is Probable potassium transport system protein Kup 3, found in Legionella pneumophila subsp. pneumophila (strain Philadelphia 1 / ATCC 33152 / DSM 7513).